The primary structure comprises 501 residues: Glycerol kinase (501 aa).

Thr-12 contacts ADP. ATP-binding residues include Thr-12, Thr-13, and Ser-14. A sn-glycerol 3-phosphate-binding site is contributed by Thr-12. Residue Arg-16 coordinates ADP. Arg-82, Glu-83, Tyr-134, and Asp-244 together coordinate sn-glycerol 3-phosphate. The glycerol site is built by Arg-82, Glu-83, Tyr-134, Asp-244, and Gln-245. Residues Thr-266 and Gly-310 each contribute to the ADP site. Positions 266, 310, 314, and 411 each coordinate ATP. Positions 411 and 415 each coordinate ADP.

It belongs to the FGGY kinase family.

The enzyme catalyses glycerol + ATP = sn-glycerol 3-phosphate + ADP + H(+). It functions in the pathway polyol metabolism; glycerol degradation via glycerol kinase pathway; sn-glycerol 3-phosphate from glycerol: step 1/1. Inhibited by fructose 1,6-bisphosphate (FBP). Functionally, key enzyme in the regulation of glycerol uptake and metabolism. Catalyzes the phosphorylation of glycerol to yield sn-glycerol 3-phosphate. The sequence is that of Glycerol kinase from Methylobacterium radiotolerans (strain ATCC 27329 / DSM 1819 / JCM 2831 / NBRC 15690 / NCIMB 10815 / 0-1).